The primary structure comprises 25 residues: Kunitz-type serine protease inhibitor 2 (25 aa).

In terms of domain architecture, BPTI/Kunitz inhibitor spans 6 to 25 (VCELPKEVGGPCRGHIIPRY).

The protein resides in the secreted. In terms of biological role, inhibits bovine trypsin, human plasma kallikrein and human neutrophil elastase. In Rhipicephalus microplus (Cattle tick), this protein is Kunitz-type serine protease inhibitor 2.